We begin with the raw amino-acid sequence, 251 residues long: Triosephosphate isomerase (251 aa).

9–11 (NWK) provides a ligand contact to substrate. Histidine 95 acts as the Electrophile in catalysis. The Proton acceptor role is filled by glutamate 167. Substrate-binding positions include glycine 173, serine 213, and 234–235 (GG). Residue serine 213 is modified to Phosphoserine.

It belongs to the triosephosphate isomerase family. In terms of assembly, homodimer.

The protein localises to the cytoplasm. The enzyme catalyses D-glyceraldehyde 3-phosphate = dihydroxyacetone phosphate. The protein operates within carbohydrate biosynthesis; gluconeogenesis. It functions in the pathway carbohydrate degradation; glycolysis; D-glyceraldehyde 3-phosphate from glycerone phosphate: step 1/1. In terms of biological role, involved in the gluconeogenesis. Catalyzes stereospecifically the conversion of dihydroxyacetone phosphate (DHAP) to D-glyceraldehyde-3-phosphate (G3P). The chain is Triosephosphate isomerase from Bacillus cereus (strain B4264).